Consider the following 199-residue polypeptide: Homeobox protein ceh-19 (199 aa).

The interval 1–42 (MAFNIESLLEKKSNPVEEGNDFEEENDSEKNGEEDEEEEEKN) is disordered. Residues 18–40 (EGNDFEEENDSEKNGEEDEEEEE) are compositionally biased toward acidic residues. Positions 94–153 (ERKPRQAYSARQLDRLETEFQTDKYLSVNKRIQLSQTLNLTETQIKTWFQNRRTKWKKQL) form a DNA-binding region, homeobox.

Its subcellular location is the nucleus. Functionally, probable transcription factor. Required for MC motor neuron differentiation and function, including role in modulating pharyngeal pumping. Regulates gene expression of FMRFamide-like neuropeptide flp-2 in MC motor neurons. May act downstream of transcription factor pha-4. The protein is Homeobox protein ceh-19 (ceh-19) of Caenorhabditis elegans.